The chain runs to 192 residues: Imidazoleglycerol-phosphate dehydratase (192 aa).

It belongs to the imidazoleglycerol-phosphate dehydratase family.

The protein resides in the cytoplasm. It carries out the reaction D-erythro-1-(imidazol-4-yl)glycerol 3-phosphate = 3-(imidazol-4-yl)-2-oxopropyl phosphate + H2O. It participates in amino-acid biosynthesis; L-histidine biosynthesis; L-histidine from 5-phospho-alpha-D-ribose 1-diphosphate: step 6/9. In Staphylococcus epidermidis (strain ATCC 35984 / DSM 28319 / BCRC 17069 / CCUG 31568 / BM 3577 / RP62A), this protein is Imidazoleglycerol-phosphate dehydratase.